Here is a 225-residue protein sequence, read N- to C-terminus: UPF0173 metal-dependent hydrolase PF1764 (225 aa).

Belongs to the UPF0173 family.

The chain is UPF0173 metal-dependent hydrolase PF1764 from Pyrococcus furiosus (strain ATCC 43587 / DSM 3638 / JCM 8422 / Vc1).